Consider the following 448-residue polypeptide: Tubulin beta chain (448 aa).

Residues glutamine 11, glutamate 69, serine 138, glycine 142, threonine 143, glycine 144, asparagine 204, and asparagine 226 each contribute to the GTP site. Glutamate 69 contacts Mg(2+).

This sequence belongs to the tubulin family. In terms of assembly, dimer of alpha and beta chains. A typical microtubule is a hollow water-filled tube with an outer diameter of 25 nm and an inner diameter of 15 nM. Alpha-beta heterodimers associate head-to-tail to form protofilaments running lengthwise along the microtubule wall with the beta-tubulin subunit facing the microtubule plus end conferring a structural polarity. Microtubules usually have 13 protofilaments but different protofilament numbers can be found in some organisms and specialized cells. Mg(2+) serves as cofactor.

The protein localises to the cytoplasm. The protein resides in the cytoskeleton. Functionally, tubulin is the major constituent of microtubules, a cylinder consisting of laterally associated linear protofilaments composed of alpha- and beta-tubulin heterodimers. Microtubules grow by the addition of GTP-tubulin dimers to the microtubule end, where a stabilizing cap forms. Below the cap, tubulin dimers are in GDP-bound state, owing to GTPase activity of alpha-tubulin. The protein is Tubulin beta chain (TUB1) of Melampsora lini (Rust fungus).